Reading from the N-terminus, the 1102-residue chain is Voltage-gated delayed rectifier potassium channel KCNH8 (1102 aa).

Residues 1-225 are Cytoplasmic-facing; sequence MPVMKGLLAP…HFSTFKAGWD (225 aa). Positions 18-90 constitute a PAS domain; it reads IATRFDGTHS…LQIEKSLEEK (73 aa). The PAC domain maps to 93 to 145; that stretch reads FKGEIMFYKKNGAPFWCLLDIVPIKNEKGDVVLFLASFKDITDTKVKITSEDK. A helical transmembrane segment spans residues 226–246; it reads WLILLATFYVAVTVPYNVCFI. Residues 247–255 are Extracellular-facing; that stretch reads GNEDLSTTR. Residues 256-276 traverse the membrane as a helical segment; the sequence is STTVSDIAVEILFIIDIILNF. Over 277–298 the chain is Cytoplasmic; it reads RTTYVSKSGQVIFEARSICIHY. A helical membrane pass occupies residues 299 to 319; the sequence is VTTWFIIDLIAALPFDLLYAF. A glycan (N-linked (GlcNAc...) asparagine) is linked at Asn-320. At 320 to 327 the chain is on the extracellular side; the sequence is NVTVVSLV. The helical; Voltage-sensor transmembrane segment at 328–348 threads the bilayer; sequence HLLKTVRLLRLLRLLQKLDRY. The Cytoplasmic portion of the chain corresponds to 349–353; that stretch reads SQHST. A helical membrane pass occupies residues 354–374; sequence IVLTLLMSMFALLAHWMACIW. Residues 375-419 are Extracellular-facing; it reads YVIGKMEREDNSLLKWEVGWLHELGKRLESPYYGNNTLGGPSIRS. Asn-409 carries N-linked (GlcNAc...) asparagine glycosylation. The pore-forming intramembrane region spans 420-440; that stretch reads AYIAALYFTLSSLTSVGFGNV. The Selectivity filter signature appears at 434 to 439; it reads SVGFGN. Topologically, residues 441–448 are extracellular; sequence SANTDAEK. The helical transmembrane segment at 449-469 threads the bilayer; sequence IFSICTMLIGALMHALVFGNV. Residues 470-1102 are Cytoplasmic-facing; it reads TAIIQRMYSR…DVKDSKAINV (633 aa). The interval 551 to 668 is cNMP-binding domain; sequence LFECASRGCL…HKFVEDIQHD (118 aa). Disordered regions lie at residues 683 to 744, 762 to 793, 818 to 845, and 960 to 983; these read SRLS…KTGS, PFHS…KEKN, EDGN…ISPS, and LVGS…LHHS. Acidic residues predominate over residues 710-723; sequence VEDEEEEEVEEEET. Over residues 777 to 793 the composition is skewed to basic and acidic residues; that stretch reads TKQEADPPNHGTRKEKN. Basic and acidic residues predominate over residues 968-982; sequence TEAHEQSPVDSELHH.

The protein belongs to the potassium channel family. H (Eag) (TC 1.A.1.20) subfamily. Kv12.1/KCNH8 sub-subfamily. In terms of assembly, the potassium channel is probably composed of a homo- or heterotetrameric complex of pore-forming alpha subunits that can associate with modulating beta subunits. As to expression, detected in superior cervical, mesenteric and coeliac ganglia. Expressed in brain (piriform cortex, olfactory tubercle, cerebral cortex, hippocampus pyramidial cells and dentate gyrus and basal ganglia of caudate/putamen and accumbens nucleus). Expressed in pituitary.

The protein resides in the membrane. The catalysed reaction is K(+)(in) = K(+)(out). Pore-forming (alpha) subunit of a voltage-gated delayed rectifier potassium channel that mediates outward-rectifying potassium currents. Elicits a slowly activating, non-inactivating and slowly deactivation outwards potassium current at depolarizating voltages from -30 mV to +50mV. Shows no obvious change in the activation rate from different holding potentials. Activation is strongly dependent on the pH of the external solution. The polypeptide is Voltage-gated delayed rectifier potassium channel KCNH8 (Rattus norvegicus (Rat)).